Consider the following 244-residue polypeptide: 1-(5-phosphoribosyl)-5-[(5-phosphoribosylamino)methylideneamino] imidazole-4-carboxamide isomerase (244 aa).

Aspartate 10 acts as the Proton acceptor in catalysis. Catalysis depends on aspartate 129, which acts as the Proton donor.

This sequence belongs to the HisA/HisF family.

The protein localises to the cytoplasm. It carries out the reaction 1-(5-phospho-beta-D-ribosyl)-5-[(5-phospho-beta-D-ribosylamino)methylideneamino]imidazole-4-carboxamide = 5-[(5-phospho-1-deoxy-D-ribulos-1-ylimino)methylamino]-1-(5-phospho-beta-D-ribosyl)imidazole-4-carboxamide. Its pathway is amino-acid biosynthesis; L-histidine biosynthesis; L-histidine from 5-phospho-alpha-D-ribose 1-diphosphate: step 4/9. The protein is 1-(5-phosphoribosyl)-5-[(5-phosphoribosylamino)methylideneamino] imidazole-4-carboxamide isomerase of Rhodococcus erythropolis (strain PR4 / NBRC 100887).